The sequence spans 147 residues: FAD synthase (147 aa).

ATP-binding positions include Thr13–Phe14, His18–His21, Asp100, and Phe127.

The protein belongs to the archaeal FAD synthase family. Homodimer. A divalent metal cation is required as a cofactor.

The enzyme catalyses FMN + ATP + H(+) = FAD + diphosphate. It functions in the pathway cofactor biosynthesis; FAD biosynthesis; FAD from FMN: step 1/1. Functionally, catalyzes the transfer of the AMP portion of ATP to flavin mononucleotide (FMN) to produce flavin adenine dinucleotide (FAD) coenzyme. The polypeptide is FAD synthase (Korarchaeum cryptofilum (strain OPF8)).